Here is a 238-residue protein sequence, read N- to C-terminus: Triggering receptor expressed on myeloid cells 1 (238 aa).

Positions 1 to 20 (MRSARLGRLLWMLFITEIQA) are cleaved as a signal peptide. Positions 21-129 (ATELPEEKYI…KDPIILFYPV (109 aa)) constitute an Ig-like V-type domain. Residues 21–210 (ATELPEEKYI…DITRDTEISL (190 aa)) are Extracellular-facing. Cys-41 and Cys-113 are joined by a disulfide. Residue Asn-135 is glycosylated (N-linked (GlcNAc...) asparagine). The interval 141 to 169 (PASAETPTQSCSPTTTLPPTTTTNRHRPR) is disordered. A compositionally biased stretch (low complexity) spans 146–163 (TPTQSCSPTTTLPPTTTT). Asn-198 is a glycosylation site (N-linked (GlcNAc...) asparagine). The helical transmembrane segment at 211–231 (ILPAVCGLLSKSLVFIVLFVV) threads the bilayer. Topologically, residues 232–238 (TRMSFTP) are cytoplasmic.

As to quaternary structure, monomer. Homomultimer; when activated. Interacts with TYROBP/DAP12. Interacts with TLR4.

It localises to the cell membrane. Its function is as follows. Cell surface receptor that plays important roles in innate and adaptive immunity by amplifying inflammatory responses. Upon activation by various ligands such as PGLYRP1, HMGB1 or HSP70, multimerizes and forms a complex with transmembrane adapter TYROBP/DAP12. In turn, initiates a SYK-mediated cascade of tyrosine phosphorylation, activating multiple downstream mediators such as BTK, MAPK1, MAPK3 or phospholipase C-gamma. This cascade promotes the neutrophil- and macrophage-mediated release of pro-inflammatory cytokines and/or chemokines, as well as their migration and thereby amplifies inflammatory responses that are triggered by bacterial and fungal infections. By also promoting the amplification of inflammatory signals that are initially triggered by Toll-like receptor (TLR) and NOD-like receptor engagement, plays a major role in the pathophysiology of acute and chronic inflammatory diseases of different etiologies including septic shock and atherosclerosis. This chain is Triggering receptor expressed on myeloid cells 1 (TREM1), found in Sus scrofa (Pig).